We begin with the raw amino-acid sequence, 158 residues long: Probable inactive acireductone dioxygenase 2 (158 aa).

Belongs to the acireductone dioxygenase (ARD) family.

The protein localises to the cytoplasm. It localises to the nucleus. Probable inactive acireductone dioxygenase. The protein is Probable inactive acireductone dioxygenase 2 of Caenorhabditis elegans.